Reading from the N-terminus, the 612-residue chain is Serine/threonine-protein kinase Nek1 (612 aa).

The Protein kinase domain occupies 4–258 (YEFLEQIGKG…ASDLLRHPHL (255 aa)). ATP contacts are provided by residues 10–18 (IGKGSFGSA) and Lys33. Asp129 acts as the Proton acceptor in catalysis. A compositionally biased stretch (polar residues) spans 503–513 (ISDGSSSSDQN). The tract at residues 503–534 (ISDGSSSSDQNATAGASSHTTSSSSRRCRFDP) is disordered. The segment covering 514–527 (ATAGASSHTTSSSS) has biased composition (low complexity).

The protein belongs to the protein kinase superfamily. NEK Ser/Thr protein kinase family. NIMA subfamily.

It catalyses the reaction L-seryl-[protein] + ATP = O-phospho-L-seryl-[protein] + ADP + H(+). It carries out the reaction L-threonyl-[protein] + ATP = O-phospho-L-threonyl-[protein] + ADP + H(+). Its function is as follows. May be involved in plant development processes. In Arabidopsis thaliana (Mouse-ear cress), this protein is Serine/threonine-protein kinase Nek1 (NEK1).